Reading from the N-terminus, the 139-residue chain is Hydrogenase maturation factor HypA (139 aa).

His-2 contacts Ni(2+). Cys-73, Cys-76, Cys-110, and Cys-113 together coordinate Zn(2+).

Belongs to the HypA/HybF family.

Functionally, involved in the maturation of [NiFe] hydrogenases. Required for nickel insertion into the metal center of the hydrogenase. The sequence is that of Hydrogenase maturation factor HypA from Pyrococcus horikoshii (strain ATCC 700860 / DSM 12428 / JCM 9974 / NBRC 100139 / OT-3).